We begin with the raw amino-acid sequence, 684 residues long: Endo-1,4-beta-xylanase A (684 aa).

The signal sequence occupies residues 1-34 (MMRSLKSRKLVFILAMLFLINAIVSLKFITYSSA). CBM-cenC domains lie at 40-190 (KSKY…IKDL) and 193-342 (AYVL…ISDE). One can recognise a GH10 domain in the interval 350-678 (DYNLPSLCEK…KFAFWSLIDP (329 aa)). Catalysis depends on E490, which acts as the Proton donor. E598 (nucleophile) is an active-site residue.

Belongs to the glycosyl hydrolase 10 (cellulase F) family.

The catalysed reaction is Endohydrolysis of (1-&gt;4)-beta-D-xylosidic linkages in xylans.. It functions in the pathway glycan degradation; xylan degradation. The sequence is that of Endo-1,4-beta-xylanase A (xynA) from Caldicellulosiruptor sp. (strain Rt8B.4).